We begin with the raw amino-acid sequence, 142 residues long: Antirestriction protein KlcA (142 aa).

The protein belongs to the antirestriction protein family.

In terms of biological role, could be involved in overcoming restriction barriers during establishment after conjugative transfer. This Escherichia coli protein is Antirestriction protein KlcA (klcA).